Reading from the N-terminus, the 316-residue chain is UDP-N-acetylenolpyruvoylglucosamine reductase (316 aa).

The 199-residue stretch at 27–225 folds into the FAD-binding PCMH-type domain; that stretch reads VGGKAERFYR…KTAINALLKK (199 aa). The active site involves R190. The active-site Proton donor is the S239. E309 is an active-site residue.

This sequence belongs to the MurB family. The cofactor is FAD.

It is found in the cytoplasm. It catalyses the reaction UDP-N-acetyl-alpha-D-muramate + NADP(+) = UDP-N-acetyl-3-O-(1-carboxyvinyl)-alpha-D-glucosamine + NADPH + H(+). It participates in cell wall biogenesis; peptidoglycan biosynthesis. Its function is as follows. Cell wall formation. The chain is UDP-N-acetylenolpyruvoylglucosamine reductase from Coxiella burnetii (strain Dugway 5J108-111).